The following is a 337-amino-acid chain: Aspartate carbamoyltransferase catalytic subunit (337 aa).

Positions 57 and 58 each coordinate carbamoyl phosphate. K86 contributes to the L-aspartate binding site. R107, H135, and Q138 together coordinate carbamoyl phosphate. The L-aspartate site is built by R172 and R234. Carbamoyl phosphate contacts are provided by L274 and P275.

It belongs to the aspartate/ornithine carbamoyltransferase superfamily. ATCase family. Heterododecamer (2C3:3R2) of six catalytic PyrB chains organized as two trimers (C3), and six regulatory PyrI chains organized as three dimers (R2).

It carries out the reaction carbamoyl phosphate + L-aspartate = N-carbamoyl-L-aspartate + phosphate + H(+). Its pathway is pyrimidine metabolism; UMP biosynthesis via de novo pathway; (S)-dihydroorotate from bicarbonate: step 2/3. Functionally, catalyzes the condensation of carbamoyl phosphate and aspartate to form carbamoyl aspartate and inorganic phosphate, the committed step in the de novo pyrimidine nucleotide biosynthesis pathway. The polypeptide is Aspartate carbamoyltransferase catalytic subunit (Saccharophagus degradans (strain 2-40 / ATCC 43961 / DSM 17024)).